The primary structure comprises 430 residues: Adenylosuccinate synthetase (430 aa).

GTP-binding positions include 12–18 (GDEGKGK) and 40–42 (GHT). Catalysis depends on aspartate 13, which acts as the Proton acceptor. Mg(2+) contacts are provided by aspartate 13 and glycine 40. IMP contacts are provided by residues 13 to 16 (DEGK), 38 to 41 (NAGH), threonine 128, arginine 142, glutamine 223, threonine 238, and arginine 302. Catalysis depends on histidine 41, which acts as the Proton donor. A substrate-binding site is contributed by 298–304 (TTTGRPR). Residues arginine 304, 330–332 (SID), and 412–414 (SVG) each bind GTP.

Belongs to the adenylosuccinate synthetase family. As to quaternary structure, homodimer. Mg(2+) is required as a cofactor.

It localises to the cytoplasm. It catalyses the reaction IMP + L-aspartate + GTP = N(6)-(1,2-dicarboxyethyl)-AMP + GDP + phosphate + 2 H(+). The protein operates within purine metabolism; AMP biosynthesis via de novo pathway; AMP from IMP: step 1/2. Plays an important role in the de novo pathway of purine nucleotide biosynthesis. Catalyzes the first committed step in the biosynthesis of AMP from IMP. In Exiguobacterium sibiricum (strain DSM 17290 / CCUG 55495 / CIP 109462 / JCM 13490 / 255-15), this protein is Adenylosuccinate synthetase.